A 607-amino-acid polypeptide reads, in one-letter code: Coronin-like protein cor-1 (607 aa).

WD repeat units lie at residues 77-117 (AHKA…LNRN), 127-167 (GHQK…ALLE), and 170-209 (GHPD…VVHE). The segment at 415–564 (PTAAESVPTQ…VSAASDVGHV (150 aa)) is disordered. Over residues 424-436 (QSYSERPPSSQQP) the composition is skewed to low complexity. Residues 437 to 447 (SPRPSASPRPR) are compositionally biased toward pro residues. 2 stretches are compositionally biased toward basic and acidic residues: residues 473–489 (SRTE…DPMK) and 517–533 (AAAE…RTAD). The segment covering 544–559 (SSRASASPRGSVSAAS) has biased composition (low complexity). Residues 563–602 (HVPQNMDELLEDLMKMKAVLRQHERRIRMLEEEIADRNMS) are a coiled coil.

The protein belongs to the WD repeat coronin family.

It is found in the cytoplasm. It localises to the cytoskeleton. Its function is as follows. Required to direct the migration of Q neuroblasts along the anterior axis of the body during larval development. This is dependent on its asymmetric expression in Q neuroblasts. In Caenorhabditis elegans, this protein is Coronin-like protein cor-1 (cor-1).